The chain runs to 434 residues: Histidinol dehydrogenase (434 aa).

The NAD(+) site is built by Tyr129, Gln191, and Asn214. 3 residues coordinate substrate: Ser240, Gln262, and His265. Gln262 and His265 together coordinate Zn(2+). Active-site proton acceptor residues include Glu329 and His330. Substrate-binding residues include His330, Asp363, Glu417, and His422. Residue Asp363 coordinates Zn(2+). Position 422 (His422) interacts with Zn(2+).

Belongs to the histidinol dehydrogenase family. Requires Zn(2+) as cofactor.

The catalysed reaction is L-histidinol + 2 NAD(+) + H2O = L-histidine + 2 NADH + 3 H(+). It functions in the pathway amino-acid biosynthesis; L-histidine biosynthesis; L-histidine from 5-phospho-alpha-D-ribose 1-diphosphate: step 9/9. In terms of biological role, catalyzes the sequential NAD-dependent oxidations of L-histidinol to L-histidinaldehyde and then to L-histidine. This Colwellia psychrerythraea (strain 34H / ATCC BAA-681) (Vibrio psychroerythus) protein is Histidinol dehydrogenase.